A 252-amino-acid chain; its full sequence is MSGRRTRSGGAAQRSGPRAPSPTKPLRRSQRKSGSELPSILPEIWPKTPSAAAVRKPIVLKRIVAHAVEVPAVQSPRRSPRISFFLEKENEPPGRELTKEDLFKTHSVPATPTSTPVPNPEAESSSKEGELDARDLEMSKKVRRSYSRLETLGSASTSTPGRRSCFGFEGLLGAEDLSGVSPVVCSKLTEVPRVCAKPWAPDMTLPGISPPPEKQKRKKKKMPEILKTELDEWAAAMNAEFEAAEQFDLLVE.

2 disordered regions span residues 1 to 48 (MSGR…WPKT) and 72 to 142 (AVQS…SKKV). 6 positions are modified to phosphoserine: S21, S33, S35, S75, S79, and S83. Residues 86–104 (LEKENEPPGRELTKEDLFK) show a composition bias toward basic and acidic residues. Residues 88–90 (KEN) carry the KEN box motif. T98 bears the Phosphothreonine mark. The span at 105–116 (THSVPATPTSTP) shows a compositional bias: low complexity. Phosphoserine is present on S107. Phosphothreonine is present on residues T111 and T115. Over residues 124 to 140 (SSSKEGELDARDLEMSK) the composition is skewed to basic and acidic residues. At S154 the chain carries Phosphoserine. Phosphothreonine is present on T159. Residues 166-168 (FGF) carry the FGF motif motif. A disordered region spans residues 199–222 (WAPDMTLPGISPPPEKQKRKKKKM). The residue at position 209 (S209) is a Phosphoserine. The segment at 230–252 (LDEWAAAMNAEFEAAEQFDLLVE) is C-terminal Sororin domain.

Belongs to the sororin family. As to quaternary structure, interacts with the APC/C complex. Interacts with the chromatin-bound cohesin complex; the interaction is indirect, occurs after DNA replication and requires acetylation of the cohesin component SMC3. Interacts (via the FGF motif) with PDS5A and PDS5B; the interaction is direct and prevents the interaction of PDS5A with WAPL. Phosphorylated. Phosphorylation, as cells enter mitosis, disrupts the interaction with PDS5A and relieves the inhibition of WAPL by CDCA5. Post-translationally, ubiquitinated by the APC/C complex in G1, leading to its degradation.

It localises to the nucleus. The protein resides in the chromosome. Its subcellular location is the cytoplasm. Functionally, regulator of sister chromatid cohesion in mitosis stabilizing cohesin complex association with chromatin. May antagonize the action of WAPL which stimulates cohesin dissociation from chromatin. Cohesion ensures that chromosome partitioning is accurate in both meiotic and mitotic cells and plays an important role in DNA repair. Required for efficient DNA double-stranded break repair. The polypeptide is Sororin (CDCA5) (Homo sapiens (Human)).